The chain runs to 681 residues: DNA-directed RNA polymerase subunit beta' (681 aa).

Positions 69, 71, 87, and 90 each coordinate Zn(2+). 3 residues coordinate Mg(2+): Asp489, Asp491, and Asp493.

Belongs to the RNA polymerase beta' chain family. RpoC1 subfamily. As to quaternary structure, in plastids the minimal PEP RNA polymerase catalytic core is composed of four subunits: alpha, beta, beta', and beta''. When a (nuclear-encoded) sigma factor is associated with the core the holoenzyme is formed, which can initiate transcription. Requires Mg(2+) as cofactor. Zn(2+) is required as a cofactor.

The protein localises to the plastid. It is found in the chloroplast. It carries out the reaction RNA(n) + a ribonucleoside 5'-triphosphate = RNA(n+1) + diphosphate. Functionally, DNA-dependent RNA polymerase catalyzes the transcription of DNA into RNA using the four ribonucleoside triphosphates as substrates. This chain is DNA-directed RNA polymerase subunit beta', found in Nicotiana sylvestris (Wood tobacco).